Consider the following 104-residue polypeptide: Vesicle-associated membrane protein 3 (104 aa).

The interval 1-23 (MTTNAPAGSSAAAGSSRRLQQTQ) is disordered. The Cytoplasmic segment spans residues 1-81 (MTTNAPAGSS…KRKYWWKNCK (81 aa)). The segment covering 7-16 (AGSSAAAGSS) has biased composition (low complexity). A v-SNARE coiled-coil homology domain is found at 18 to 78 (RLQQTQNQVD…AKLKRKYWWK (61 aa)). Residues lysine 70, lysine 72, and lysine 81 each participate in a glycyl lysine isopeptide (Lys-Gly) (interchain with G-Cter in ubiquitin) cross-link. The chain crosses the membrane as a helical; Anchor for type IV membrane protein span at residues 82 to 102 (MWAIGITVVVIIIIIIVVWSI). Over 103-104 (SS) the chain is Vesicular.

Belongs to the synaptobrevin family. As to quaternary structure, interacts with POPDC1 (via the C-terminus cytoplasmic tail). Interacts with BCAP31; involved in VAMP3 export from the endoplasmic reticulum. Interacts with BAIAP3; this interaction is increased in the presence of calcium. Interacts with PICALM. In terms of processing, ubiquitinated by RNF167 at Lys-70, Lys-72 and Lys-81, regulating the recycling endosome pathway.

It localises to the early endosome membrane. Its subcellular location is the recycling endosome membrane. The protein resides in the synapse. It is found in the synaptosome. In terms of biological role, SNARE involved in vesicular transport from the late endosomes to the trans-Golgi network. This is Vesicle-associated membrane protein 3 (VAMP3) from Bos taurus (Bovine).